Reading from the N-terminus, the 279-residue chain is Pleckstrin homology domain-containing family F member 1 (279 aa).

The PH domain maps to 35 to 131 (VLLGEGVLTK…WISHIEECVR (97 aa)). The FYVE-type zinc finger occupies 152 to 212 (DKATDICMRC…VCSLCYRELA (61 aa)). 8 residues coordinate Zn(2+): C158, C161, C175, C178, C183, C186, C204, and C207. Residues 218–264 (EEAEEQGAGSPGQPAHLARPICGASSGDDDDSDEDKEGSRDGDWPSS) form a disordered region. Positions 244 to 253 (GDDDDSDEDK) are enriched in acidic residues.

In terms of tissue distribution, highly expressed in heart and skeletal muscle. Weakly expressed in brain, thymus, spleen, kidney, liver, small intestine, placenta and lung.

It localises to the nucleus. Its subcellular location is the cytoplasm. It is found in the perinuclear region. The protein localises to the lysosome. In terms of biological role, may induce apoptosis through the lysosomal-mitochondrial pathway. Translocates to the lysosome initiating the permeabilization of lysosomal membrane (LMP) and resulting in the release of CTSD and CTSL to the cytoplasm. Triggers the caspase-independent apoptosis by altering mitochondrial membrane permeabilization (MMP) resulting in the release of PDCD8. The sequence is that of Pleckstrin homology domain-containing family F member 1 (PLEKHF1) from Homo sapiens (Human).